Reading from the N-terminus, the 443-residue chain is ATP-dependent protease ATPase subunit HslU (443 aa).

ATP contacts are provided by residues isoleucine 20, 62-67 (GVGKTE), aspartate 255, glutamate 321, and arginine 393.

Belongs to the ClpX chaperone family. HslU subfamily. In terms of assembly, a double ring-shaped homohexamer of HslV is capped on each side by a ring-shaped HslU homohexamer. The assembly of the HslU/HslV complex is dependent on binding of ATP.

It is found in the cytoplasm. Its function is as follows. ATPase subunit of a proteasome-like degradation complex; this subunit has chaperone activity. The binding of ATP and its subsequent hydrolysis by HslU are essential for unfolding of protein substrates subsequently hydrolyzed by HslV. HslU recognizes the N-terminal part of its protein substrates and unfolds these before they are guided to HslV for hydrolysis. The chain is ATP-dependent protease ATPase subunit HslU from Helicobacter pylori (strain P12).